Here is a 547-residue protein sequence, read N- to C-terminus: Chaperonin GroEL (547 aa).

ATP is bound by residues 30–33 (TLGP), K51, 87–91 (DGTTT), G415, 479–481 (NAA), and D495.

The protein belongs to the chaperonin (HSP60) family. In terms of assembly, forms a cylinder of 14 subunits composed of two heptameric rings stacked back-to-back. Interacts with the co-chaperonin GroES.

The protein localises to the cytoplasm. The catalysed reaction is ATP + H2O + a folded polypeptide = ADP + phosphate + an unfolded polypeptide.. Its function is as follows. Together with its co-chaperonin GroES, plays an essential role in assisting protein folding. The GroEL-GroES system forms a nano-cage that allows encapsulation of the non-native substrate proteins and provides a physical environment optimized to promote and accelerate protein folding. This Marinomonas sp. (strain MWYL1) protein is Chaperonin GroEL.